A 342-amino-acid polypeptide reads, in one-letter code: MQPPPMRERQRWRPEEDAILLAYVRQYGPREWSLVSQRMNRPLHRDAKSCLERWKNYLRPGIKKGSLTDDEQRLVIRLQAKHGNKWKKIAAEVPGRTAKRLGKWWEVFKEKQQRELRDRDRRRLPPPLDGDERGCAGGRYDWLLEDFADKLVNDHHRRMMAAPILPPWMSSSPSSSSSPSVTLSLASAAVAPAPAAPPPTWGGGGGGEVVVAELMECCREMEEGQRAWAAHRKEAAWRMKRVEMQLETERACRRREATEEFEAKMRALREEQAAAVERVEAEYREKMAGLRRDAEAKEQKMAEQWAAKHARLAKFLDQVAACRRWPPVEINGGGGGGPGGGR.

HTH myb-type domains follow at residues Met1 to Leu58 and Arg59 to Gln113. 2 DNA-binding regions (H-T-H motif) span residues Trp32 to Leu58 and Trp86 to Lys109. A coiled-coil region spans residues Arg253 to Gln304.

The protein resides in the nucleus. Functionally, transcription factor required for normal cell differentiation. May interact with other proteins to repress the knox homeobox genes. This chain is Protein rough sheath 2 homolog (RS2), found in Oryza sativa subsp. japonica (Rice).